The chain runs to 57 residues: uncharacterized protein (57 aa).

2 helical membrane passes run 4–26 (VNIL…SELW) and 33–55 (ALGY…IAIL).

It localises to the cell membrane. This is an uncharacterized protein from Methanocaldococcus jannaschii (strain ATCC 43067 / DSM 2661 / JAL-1 / JCM 10045 / NBRC 100440) (Methanococcus jannaschii).